The sequence spans 471 residues: Putative multidrug resistance protein MdtD (471 aa).

The Periplasmic portion of the chain corresponds to 1-11 (MTDLPDSTRWQ). The helical transmembrane segment at 12–32 (LWIVAFGFFMQSLDTTIVNTA) threads the bilayer. The Cytoplasmic segment spans residues 33–48 (LPSMAQSLGESPLHMH). The chain crosses the membrane as a helical span at residues 49–69 (MVIVSYVLTVAVMLPASGWLA). Residues 70 to 76 (DKVGVRN) lie on the Periplasmic side of the membrane. The chain crosses the membrane as a helical span at residues 77-97 (IFFTAIVLFTLGSLFCALSGT). Residues 98–101 (LNEL) lie on the Cytoplasmic side of the membrane. The helical transmembrane segment at 102–124 (LLARALQGVGGAMMVPVGRLTVM) threads the bilayer. At 125–137 (KIVPREQYMAAMT) the chain is on the periplasmic side. Residues 138-158 (FVTLPGQVGPLLGPALGGLLV) traverse the membrane as a helical segment. Topologically, residues 159-164 (EYASWH) are cytoplasmic. A helical transmembrane segment spans residues 165 to 185 (WIFLINIPVGIIGAIATLMLM). Topologically, residues 186–196 (PNYTMQTRRFD) are periplasmic. The chain crosses the membrane as a helical span at residues 197–217 (LSGFLLLAVGMAVLTLALDGS). Residues 218 to 224 (KGTGFSP) lie on the Cytoplasmic side of the membrane. Residues 225–245 (LAIAGLVAVGVVALVLYLLHA) traverse the membrane as a helical segment. Topologically, residues 246 to 262 (QNNNRALFSLKLFRTRT) are periplasmic. Residues 263–283 (FSLGLAGSFAGRIGSGMLPFM) traverse the membrane as a helical segment. Topologically, residues 284–285 (TP) are cytoplasmic. Residues 286–306 (VFLQIGLGFSPFHAGLMMIPM) traverse the membrane as a helical segment. The Periplasmic segment spans residues 307–341 (VLGSMGMKRIVVQVVNRFGYRRVLVATTLGLSLVT). Residues 342 to 362 (LLFMTTALLGWYYVLPFVLFL) form a helical membrane-spanning segment. Residues 363–395 (QGMVNSTRFSSMNTLTLKDLPDNLASSGNSLLS) lie on the Cytoplasmic side of the membrane. Residues 396–416 (MIMQLSMSIGVTIAGLLLGLF) form a helical membrane-spanning segment. At 417-430 (GSQHVSVDSGTTQT) the chain is on the periplasmic side. The chain crosses the membrane as a helical span at residues 431-451 (VFMYTWLSMAFIIALPAFVFA). Residues 452-471 (RVPSDTHQNVAISRRKRSAQ) lie on the Cytoplasmic side of the membrane.

This sequence belongs to the major facilitator superfamily. TCR/Tet family.

It localises to the cell inner membrane. The protein is Putative multidrug resistance protein MdtD of Escherichia coli O45:K1 (strain S88 / ExPEC).